Reading from the N-terminus, the 771-residue chain is Protein lin-54 homolog (771 aa).

2 disordered regions span residues Ala-21–Val-44 and Thr-68–Leu-105. Low complexity predominate over residues Ser-72 to Thr-92. Phosphoserine occurs at positions 288, 292, and 308. The region spanning Pro-544–Glu-657 is the CRC domain. The tract at residues Lys-546–Tyr-559 is DNA-binding. Residues Cys-548, Cys-550, Cys-555, Cys-560, Cys-562, Cys-569, Cys-572, Cys-574, and Cys-577 each contribute to the Zn(2+) site. The interval Ile-606–Ser-619 is linker. Residues Cys-622, Cys-624, Cys-629, Cys-634, Cys-636, Cys-643, Cys-647, Cys-649, and Cys-652 each coordinate Zn(2+). Residues Cys-622–Glu-635 form a DNA-binding region.

This sequence belongs to the lin-54 family. As to quaternary structure, component of the DREAM complex.

It localises to the nucleus. In terms of biological role, component of the DREAM complex, a multiprotein complex that can both act as a transcription activator or repressor depending on the context. Specifically recognizes the consensus motif 5'-TTYRAA-3' in target DNA. The sequence is that of Protein lin-54 homolog (lin54) from Danio rerio (Zebrafish).